The primary structure comprises 162 residues: Ubiquitin D (162 aa).

Ubiquitin-like domains lie at 3–78 and 87–160; these read SVRT…LKVV and LFLV…THCT.

This sequence belongs to the ubiquitin D family. As to quaternary structure, interacts directly with the 26S proteasome. Interacts with NUB1; this interaction facilitates the linking of UBD-conjugated target protein to the proteasome complex and accelerates its own degradation and that of its conjugates. Interacts (via ubiquitin-like 1 domain) with the spindle checkpoint protein MAD2L1 during mitosis. Present in aggresomes of proteasome inhibited cells. Interacts with HDAC6 under proteasome impairment conditions. Forms a thioester with UBA6 in cells stimulated with tumor necrosis factor-alpha (TNFa) and interferon-gamma (IFNg). Interacts with SQSTM1 and TP53/p53. Post-translationally, can be acetylated. In terms of tissue distribution, mostly expressed in thymus and intestine.

Its subcellular location is the nucleus. It is found in the cytoplasm. Ubiquitin-like protein modifier which can be covalently attached to target proteins and subsequently leads to their degradation by the 26S proteasome, in a NUB1-dependent manner. Conjugation to the target protein is activated by UBA6 via adenylation of its C-terminal glycine. Probably functions as a survival factor. Promotes the expression of the proteasome subunit beta type-9 (PSMB9/LMP2). Regulates TNF-alpha-induced and LPS-mediated activation of the central mediator of innate immunity NF-kappa-B by promoting TNF-alpha-mediated proteasomal degradation of ubiquitinated-I-kappa-B-alpha. Required for TNF-alpha-induced p65 nuclear translocation in renal tubular epithelial cells (RTECs). May be involved in dendritic cell (DC) maturation, the process by which immature dendritic cells differentiate into fully competent antigen-presenting cells that initiate T-cell responses. Mediates mitotic non-disjunction and chromosome instability, in long-term in vitro culture and cancers, by abbreviating mitotic phase and impairing the kinetochore localization of MAD2L1 during the prometaphase stage of the cell cycle. May be involved in the formation of aggresomes when proteasome is saturated or impaired. Mediates apoptosis in a caspase-dependent manner, especially in renal epithelium and tubular cells during renal diseases. This is Ubiquitin D (Ubd) from Mus musculus (Mouse).